A 327-amino-acid polypeptide reads, in one-letter code: GTPase Obg (327 aa).

An Obg domain is found at 1-159 (MKFLDQVKIY…YVIWLQLKTI (159 aa)). The OBG-type G domain maps to 160–327 (ADVGIVGLPN…IKAKLLSYVS (168 aa)). GTP is bound by residues 166 to 173 (GLPNAGKS), 191 to 195 (FTTLN), 212 to 215 (DIPG), 279 to 282 (NKTD), and 308 to 310 (STL). Mg(2+) is bound by residues S173 and T193.

It belongs to the TRAFAC class OBG-HflX-like GTPase superfamily. OBG GTPase family. Monomer. Mg(2+) serves as cofactor.

It is found in the cytoplasm. Its function is as follows. An essential GTPase which binds GTP, GDP and possibly (p)ppGpp with moderate affinity, with high nucleotide exchange rates and a fairly low GTP hydrolysis rate. Plays a role in control of the cell cycle, stress response, ribosome biogenesis and in those bacteria that undergo differentiation, in morphogenesis control. The polypeptide is GTPase Obg (Pelagibacter ubique (strain HTCC1062)).